The following is a 360-amino-acid chain: Protein Wnt-2 (360 aa).

A signal peptide spans 1–25 (MNAPLGGIWLGLPLLLTWLSPEVSS). 11 cysteine pairs are disulfide-bonded: C76–C87, C127–C135, C137–C157, C206–C220, C208–C215, C278–C309, C294–C304, C308–C348, C324–C339, C326–C336, and C331–C332. A lipid anchor (O-palmitoleoyl serine; by PORCN) is attached at S212. N-linked (GlcNAc...) asparagine glycosylation occurs at N295.

It belongs to the Wnt family. In terms of processing, palmitoleoylation is required for efficient binding to frizzled receptors. Depalmitoleoylation leads to Wnt signaling pathway inhibition.

The protein resides in the secreted. It localises to the extracellular space. It is found in the extracellular matrix. Ligand for members of the frizzled family of seven transmembrane receptors. Probable developmental protein. May be a signaling molecule which affects the development of discrete regions of tissues. Is likely to signal over only few cell diameters. This is Protein Wnt-2 (WNT2) from Oryctolagus cuniculus (Rabbit).